Consider the following 314-residue polypeptide: uncharacterized protein (314 aa).

2 helical membrane passes run 23–43 (LALGPVHPGGPTLIDLLMALF) and 98–118 (MASGIGGALSGALGGVMGPLT). Residues 165-184 (GLGSGAGGGDVGGGGAGGTT) are compositionally biased toward gly residues. Residues 165–314 (GLGSGAGGGD…APDEKTDAGE (150 aa)) are disordered. The segment covering 190–202 (GPPPVPTSSPPTT) has biased composition (pro residues). Composition is skewed to low complexity over residues 203–212 (PAGAPTKSAT) and 219–232 (ASPASAHMGAAGMP). Residues 221–241 (PASAHMGAAGMPMVPPGAMGA) traverse the membrane as a helical segment. Basic and acidic residues predominate over residues 294–314 (LLPEHKDFGRIAPDEKTDAGE).

It is found in the cell membrane. This is an uncharacterized protein from Mycobacterium tuberculosis (strain CDC 1551 / Oshkosh).